Consider the following 377-residue polypeptide: uncharacterized protein (377 aa).

Transmembrane regions (helical) follow at residues 4–24, 41–61, 85–105, 134–154, 159–179, 192–212, 278–298, 301–321, 327–347, and 356–376; these read LLTPWRGVAAGFLLNGILLGT, ASFGVLLLLLGLGALISFPIT, IAALGLAPTIPLLAIALFLFG, FHAMWSVGAVLGAAGGYIATV, VYVHFLVTAVTIGGLLGPFLL, GAVGLVLPNSGLFLVGLIALA, VFGILLIVLGETLPLVVAGFV, GVGYAAVLPLAFSRAAADLVV, IASVAIFAYGAMTLGPFAIGL, and LCFFIVGLFAALVAVLAPVLK.

It to R.meliloti MosC.

The protein resides in the cell membrane. Its function is as follows. Could be involved in a transport system. This is an uncharacterized protein from Sinorhizobium fredii (strain NBRC 101917 / NGR234).